Consider the following 379-residue polypeptide: Type II methyltransferase M.SsoII (379 aa).

The region spanning 9 to 66 is the HTH cro/C1-type domain; the sequence is IKEKRERLHMTQKEFADALGLSKYGDRTIRRWERGETKPTGAELKAVIDFPDTPPYPN. Residues 72-379 form the SAM-dependent MTase C5-type domain; that stretch reads YRMIDLFAGI…AEKIISTLDS (308 aa). Residue Cys142 is part of the active site.

It belongs to the class I-like SAM-binding methyltransferase superfamily. C5-methyltransferase family.

It catalyses the reaction a 2'-deoxycytidine in DNA + S-adenosyl-L-methionine = a 5-methyl-2'-deoxycytidine in DNA + S-adenosyl-L-homocysteine + H(+). A methylase that recognizes the double-stranded sequence 5'-CCNGG-3', methylates C-2 on both strands, and protects the DNA from cleavage by the SsoII endonuclease. The polypeptide is Type II methyltransferase M.SsoII (ssoIIM) (Shigella sonnei).